A 244-amino-acid chain; its full sequence is Glutathione-independent glyoxalase hsp3101 (244 aa).

Active-site residues include Cys139, His140, and Glu173.

The protein belongs to the peptidase C56 family. HSP31-like subfamily.

Its subcellular location is the cytoplasm. It localises to the nucleus. The enzyme catalyses methylglyoxal + H2O = (R)-lactate + H(+). Catalyzes the conversion of methylglyoxal (MG) to D-lactate in a single glutathione (GSH)-independent step. May play a role in detoxifying endogenously produced glyoxals. Involved in protection against reactive oxygen species (ROS). This chain is Glutathione-independent glyoxalase hsp3101, found in Schizosaccharomyces pombe (strain 972 / ATCC 24843) (Fission yeast).